The chain runs to 827 residues: NT-3 growth factor receptor (827 aa).

Positions 1–31 (MDVSLCPTKCTFWRVFLLWSIWGDYLLSVLA) are cleaved as a signal peptide. 2 cysteine pairs are disulfide-bonded: Cys32-Cys38 and Cys36-Cys45. Topologically, residues 32-430 (CPANCLCSKT…ITVTHKPEED (399 aa)) are extracellular. N-linked (GlcNAc...) asparagine glycosylation is found at Asn68, Asn72, and Asn79. LRR repeat units follow at residues 104–125 (GLQRLTIRNSGLRNIQPRAFAK) and 128–149 (HLRYIDLSGNRLTTLSWQLFQT). One can recognise an LRRCT domain in the interval 160 to 209 (NPFNCSCDIRWIQLWQEKGEANLQSQQLHCMNLDTAVILLRNMNITQCDL). Asn163 is a glycosylation site (N-linked (GlcNAc...) asparagine). 2 cysteine pairs are disulfide-bonded: Cys164–Cys189 and Cys166–Cys207. N-linked (GlcNAc...) asparagine glycans are attached at residues Asn203, Asn218, Asn232, Asn259, Asn267, Asn272, and Asn294. Ig-like C2-type domains lie at 210–300 (PEIS…VLLT) and 319–382 (HCIA…VATN). Cys231 and Cys284 are joined by a disulfide. Residues Cys320 and Cys362 are joined by a disulfide bond. N-linked (GlcNAc...) asparagine glycosylation is found at Asn375 and Asn388. Residues 431 to 455 (TFGVSIAVGLAAFACVLLVVLFIMI) traverse the membrane as a helical segment. At 456 to 827 (NKYGRRSKFG…ATPIYLDILG (372 aa)) the chain is on the cytoplasmic side. The residue at position 518 (Tyr518) is a Phosphotyrosine; by autocatalysis. Residues 540–812 (IVLKRELGEG…LNIKEIYKIL (273 aa)) form the Protein kinase domain. ATP contacts are provided by residues 546-554 (LGEGAFGKV) and Lys574. The active-site Proton acceptor is the Asp681. Tyr707, Tyr711, Tyr712, and Tyr822 each carry phosphotyrosine; by autocatalysis.

This sequence belongs to the protein kinase superfamily. Tyr protein kinase family. Insulin receptor subfamily. Exists in a dynamic equilibrium between monomeric (low affinity) and dimeric (high affinity) structures. Interacts with PTPRS. In terms of processing, ligand-mediated auto-phosphorylation.

It localises to the membrane. It catalyses the reaction L-tyrosyl-[protein] + ATP = O-phospho-L-tyrosyl-[protein] + ADP + H(+). In terms of biological role, receptor tyrosine kinase involved in nervous system and probably heart development. Upon binding of its ligand NTF3/neurotrophin-3, NTRK3 autophosphorylates and activates different signaling pathways, including the phosphatidylinositol 3-kinase/AKT and the MAPK pathways, that control cell survival and differentiation. The KT and KD isoforms fail to stimulate transformation, process outgrowth or survival. Isoform KI25 exhibits tyrosine phosphorylation in the absence of ligand and is unable to mediate survival of neuronal cells. In Gallus gallus (Chicken), this protein is NT-3 growth factor receptor (NTRK3).